The chain runs to 1020 residues: Sodium/potassium-transporting ATPase subunit alpha-2 (1020 aa).

Positions 1–5 (MGRGA) are excised as a propeptide. The segment at 1-31 (MGRGAGREYSPAATTAENGGGKKKQKEKELD) is disordered. Residues 6–85 (GREYSPAATT…NALTPPPTTP (80 aa)) lie on the Cytoplasmic side of the membrane. The residue at position 10 (serine 10) is a Phosphoserine. Residues 80–82 (PPP) are interaction with phosphoinositide-3 kinase. A helical membrane pass occupies residues 86 to 106 (EWVKFCRQLFGGFSILLWIGA). Residues 107–129 (ILCFLAYGIQAAMEDEPSNDNLY) lie on the Extracellular side of the membrane. A helical transmembrane segment spans residues 130–150 (LGVVLAAVVIVTGCFSYYQEA). The Cytoplasmic segment spans residues 151-286 (KSSKIMDSFK…VGRTPIAMEI (136 aa)). The segment covering 212-227 (DNSSLTGESEPQTRSP) has biased composition (polar residues). The disordered stretch occupies residues 212–231 (DNSSLTGESEPQTRSPEFTH). The helical transmembrane segment at 287–306 (EHFIQLITGVAVFLGVSFFV) threads the bilayer. Over 307 to 318 (LSLILGYSWLEA) the chain is Extracellular. Residues 319-336 (VIFLIGIIVANVPEGLLA) traverse the membrane as a helical segment. Over 337–769 (TVTVCLTLTA…EEGRLIFDNL (433 aa)) the chain is Cytoplasmic. Aspartate 374 acts as the 4-aspartylphosphate intermediate in catalysis. Serine 439, serine 450, and serine 559 each carry phosphoserine. Residue threonine 570 is modified to Phosphothreonine. 2 positions are modified to phosphoserine: serine 587 and serine 672. The Mg(2+) site is built by aspartate 714 and aspartate 718. A helical transmembrane segment spans residues 770 to 789 (KKSIAYTLTSNIPEITPFLL). At 790 to 799 (FIIANIPLPL) the chain is on the extracellular side. A helical transmembrane segment spans residues 800-820 (GTVTILCIDLGTDMVPAISLA). Topologically, residues 821–840 (YEAAESDIMKRQPRNPQTDK) are cytoplasmic. Serine 826 carries the post-translational modification Phosphoserine. A helical transmembrane segment spans residues 841-863 (LVNERLISMAYGQIGMIQALGGF). Over 864 to 915 (FTYFVILAENGFLPSRLLGIRLDWDDRSMNDLEDSYGQEWTYEQRKVVEFTC) the chain is Extracellular. A helical transmembrane segment spans residues 916–935 (HTAFFASIVVVQWADLIICK). At 936–948 (TRRNSVFQQGMKN) the chain is on the cytoplasmic side. Serine 940 is subject to Phosphoserine; by PKA. The helical transmembrane segment at 949–967 (KILIFGLLEETALAAFLSY) threads the bilayer. Over 968–982 (CPGMGVALRMYPLKV) the chain is Extracellular. A helical transmembrane segment spans residues 983-1003 (TWWFCAFPYSLLIFIYDEVRK). Over 1004–1020 (LILRRYPGGWVEKETYY) the chain is Cytoplasmic.

It belongs to the cation transport ATPase (P-type) (TC 3.A.3) family. Type IIC subfamily. As to quaternary structure, the sodium/potassium-transporting ATPase is composed of a catalytic alpha subunit, an auxiliary non-catalytic beta subunit and an additional regulatory subunit. Interacts with regulatory subunit FXYD1.

The protein localises to the membrane. The protein resides in the cell membrane. It catalyses the reaction K(+)(out) + Na(+)(in) + ATP + H2O = K(+)(in) + Na(+)(out) + ADP + phosphate + H(+). In terms of biological role, this is the catalytic component of the active enzyme, which catalyzes the hydrolysis of ATP coupled with the exchange of sodium and potassium ions across the plasma membrane. This action creates the electrochemical gradient of sodium and potassium, providing the energy for active transport of various nutrients. The protein is Sodium/potassium-transporting ATPase subunit alpha-2 (ATP1A2) of Sus scrofa (Pig).